The following is a 154-amino-acid chain: Myoglobin (154 aa).

The 147-residue stretch at 2–148 (GLSDGEWELV…FRNDIAAKYK (147 aa)) folds into the Globin domain. The residue at position 4 (Ser4) is a Phosphoserine. Phosphothreonine is present on Thr68. His94 provides a ligand contact to heme b.

The protein belongs to the globin family. As to quaternary structure, monomeric.

The protein resides in the cytoplasm. It is found in the sarcoplasm. The catalysed reaction is Fe(III)-heme b-[protein] + nitric oxide + H2O = Fe(II)-heme b-[protein] + nitrite + 2 H(+). It catalyses the reaction H2O2 + AH2 = A + 2 H2O. Its function is as follows. Monomeric heme protein which primary function is to store oxygen and facilitate its diffusion within muscle tissues. Reversibly binds oxygen through a pentacoordinated heme iron and enables its timely and efficient release as needed during periods of heightened demand. Depending on the oxidative conditions of tissues and cells, and in addition to its ability to bind oxygen, it also has a nitrite reductase activity whereby it regulates the production of bioactive nitric oxide. Under stress conditions, like hypoxia and anoxia, it also protects cells against reactive oxygen species thanks to its pseudoperoxidase activity. The chain is Myoglobin (MB) from Elephas maximus (Indian elephant).